Here is an 89-residue protein sequence, read N- to C-terminus: SAP domain-containing new25 (89 aa).

The SAP domain occupies P44–L78.

The chain is SAP domain-containing new25 (new25) from Schizosaccharomyces pombe (strain 972 / ATCC 24843) (Fission yeast).